A 331-amino-acid polypeptide reads, in one-letter code: Phenylalanine--tRNA ligase alpha subunit (331 aa).

Position 252 (Glu-252) interacts with Mg(2+).

The protein belongs to the class-II aminoacyl-tRNA synthetase family. Phe-tRNA synthetase alpha subunit type 1 subfamily. As to quaternary structure, tetramer of two alpha and two beta subunits. Requires Mg(2+) as cofactor.

It is found in the cytoplasm. The catalysed reaction is tRNA(Phe) + L-phenylalanine + ATP = L-phenylalanyl-tRNA(Phe) + AMP + diphosphate + H(+). This is Phenylalanine--tRNA ligase alpha subunit from Marinomonas sp. (strain MWYL1).